Consider the following 164-residue polypeptide: MITRGRVWKFGDNISTDAITPGRYNLTKDPNELAKIAFIEERPEFSKEVKPGDVVVGGKNFGIGSSRESAALALKAAGVGGVIAKSFGRIFFRNAVNLGLPLLIGNTDPLLDGEIVEVNWRSGEVKKEDGEVLKFKPLDSFLLAIVEEGGIIEYIRRRGDLWIQ.

The protein belongs to the LeuD family. LeuD type 2 subfamily. As to quaternary structure, heterodimer of LeuC and LeuD.

The enzyme catalyses (2R,3S)-3-isopropylmalate = (2S)-2-isopropylmalate. Its pathway is amino-acid biosynthesis; L-leucine biosynthesis; L-leucine from 3-methyl-2-oxobutanoate: step 2/4. Catalyzes the isomerization between 2-isopropylmalate and 3-isopropylmalate, via the formation of 2-isopropylmaleate. This is 3-isopropylmalate dehydratase small subunit 2 (leuD2) from Pyrococcus furiosus (strain ATCC 43587 / DSM 3638 / JCM 8422 / Vc1).